We begin with the raw amino-acid sequence, 1213 residues long: MNIEQIFKKPLKRNINGVVKAEQTDDASAYIELDEYVITRELENHLRHFFESYVPATGPERIRMENKIGVWVSGFFGSGKSHFIKILSYLLSNRKVTHNGTERNAYSFFEEKIKDALFLADINKAVHYPTEVILFNIDSRANVDDKEDAILKVFLKVFNERIGYCADFPHIAHLERELDKRGQYETFKAAFADINGSRWEDERDAYYFISDDMAQALSQATQQSLEASRQWVEQLDKNFPLDINNFCQWVKEWLDDNGKNILFMVDEVGQFIGKNTQMMLKLQTITENLGVICGGRAWVIVTSQADINAAIGGMSSRDGQDFSKIQGRFSTRLQLSSSNTSEVIQKRLLVKTDEAKAALAKVWQEKGDILRNQLAFDTTTTTALRPFTSEEEFVDNYPFVPWHYQILQKVFESIRTKGAAGKQLAMGERSQLEAFQTAAQQISAQGLDSLVPFWRFYAAIESFLEPAVSRTITQACQNGILDEFDGNLLKTLFLIRYVETLKSTLDNLVTLSIDRIDADKVELRRRVEKSLNTLERLMLIARVEDKYVFLTNEEKEIENEIRNVDVDFSAINKKLASIIFDDILKSRKYRYPANKQDFDISRFLNGHPLDGAVLNDLVVKILTPKDPTYSFYNSDATCRPYTSEGDGCILIRLPEEGRTWSDIDLVVQTEKFLKDNAGQRPEQATLLSEKARENSNREKLLRVQLESLLAEADVWAIGERLPKKSSTPSNIVDEACRYVIENTFGKLKMLRPFNGDISREIHALLTVENDTELDLGNLEESNPDAMREVETWISMNIEYNKPVYLRDILNHFARRPYGWPEDEVKLLVARLACKGKFSFSQQNNNVERKQAWELFNNSRRHSELRLHKVRRHDEAQVRKAAQTMADIAQQPFNEREEPALVEHIRQVFEEWKQELNVFRAKAEGGNNPGKNEIESGLRLLNAILNEKEDFALIEKVSSLKDELLDFSEDREDLVDFYRKQFATWQKLGAALNGSFKSNRSALEKDAAAVKALGELESIWQMPEPYKHLNRITLLIEQVQNVNHQLVEQHRQHALERIDARIEESRQRLLEAHATSELQNSVLLPMQKARKRAEVSQSIPEILAEQQETKALQMDADKKINLWIDELRKKQEAQLRAANEAKRAAESEQTYVVVEKPVIQPVPKKTHLVNVASEMRNATGGEVLETTEQVEKALDTLRTTLLAAIKAGDRIRLQ.

Belongs to the BrxC family.

Its function is as follows. BREX systems (bacteriophage exclusion) provide immunity against bacteriophage. Part of a type 1 BREX system which protects against dsDNA phage. This system allows phage adsorption but prevents phage DNA replication, without degradation of the phage DNA. Methylation of bacterial DNA by PglX guides self/non-self discrimination. When the brxA-brxB-brxC-pglX-pglZ-brxL genes are transformed into a susceptible E.coli strain (BW25113) they confer very high resistance to infection by bacteriophage VR7 and VpaE1, about 100-fold protection against lambda, T5 and T7 and no protection against RNA phage Qbeta, ssDNA phage M13 or dSDNA phage T4 and VR5. Glycosylated phage DNA is not susceptible to BREX. The BREX system does not confer resistance to lysogenic lambda phage, i.e. prophage that are integrated into the chromosomal DNA and then induced to form phage. The sequence is that of Probable ATP-binding protein BrxC from Escherichia coli O9:H4 (strain HS).